Here is a 1175-residue protein sequence, read N- to C-terminus: uncharacterized protein (1175 aa).

ATP is bound at residue 586–593 (GPAGTGKT).

This is an uncharacterized protein from Methanocaldococcus jannaschii (strain ATCC 43067 / DSM 2661 / JAL-1 / JCM 10045 / NBRC 100440) (Methanococcus jannaschii).